We begin with the raw amino-acid sequence, 88 residues long: Arminin 1b (88 aa).

The signal sequence occupies residues 1-18; the sequence is MKTVLAFLFLTFIAFTHA. The propeptide occupies 19-57; that stretch reads ESYEDVKEEIKNEVEREIFEDLEEESDVLESNVRELNDA. Valine amide is present on valine 85.

Belongs to the arminin family. Expressed in entodermal epithelium along the body column.

The protein resides in the secreted. It is found in the target cell membrane. Functionally, antimicrobial peptide with a broad-spectrum antimicrobial activity. Keeps its antibacterial activity under a wide range of salt concentrations that mimic physiological conditions of human blood, which is surprising, since Hydra is an obligate freshwater animal with nearly no salt tolerance. Does not affect red blood cells. The sequence is that of Arminin 1b from Hydra vulgaris (Hydra).